We begin with the raw amino-acid sequence, 182 residues long: Sperm acrosome-associated protein 7 (182 aa).

The N-terminal stretch at 1-24 (MAANRGSRTFLSVFLLCCWQGAEL) is a signal peptide. Asn40 is a glycosylation site (N-linked (GlcNAc...) asparagine). Residues 112-140 (LPTKEESGKNDRSTVANLHDHSSQTKHEP) show a composition bias toward basic and acidic residues. The tract at residues 112–154 (LPTKEESGKNDRSTVANLHDHSSQTKHEPPSSPEGKGSSNDDV) is disordered.

As to expression, testis-specific. Expressed in zygotene and pachytene spermatocytes, round spermatids, elongating spermatids and spermatozoa (at protein level). Testis-specific.

It is found in the secreted. The protein localises to the cytoplasmic vesicle. Its subcellular location is the secretory vesicle. The protein resides in the acrosome lumen. Its function is as follows. Involved in fertilization. Seems not to play a direct role in sperm-egg binding or gamete fusion. This is Sperm acrosome-associated protein 7 from Mus musculus (Mouse).